A 171-amino-acid polypeptide reads, in one-letter code: NADH-quinone oxidoreductase subunit B 1 (171 aa).

4 residues coordinate [4Fe-4S] cluster: Cys44, Cys45, Cys110, and Cys139.

Belongs to the complex I 20 kDa subunit family. In terms of assembly, NDH-1 is composed of 14 different subunits. Subunits NuoB, C, D, E, F, and G constitute the peripheral sector of the complex. It depends on [4Fe-4S] cluster as a cofactor.

It localises to the cell inner membrane. The catalysed reaction is a quinone + NADH + 5 H(+)(in) = a quinol + NAD(+) + 4 H(+)(out). NDH-1 shuttles electrons from NADH, via FMN and iron-sulfur (Fe-S) centers, to quinones in the respiratory chain. The immediate electron acceptor for the enzyme in this species is believed to be ubiquinone. Couples the redox reaction to proton translocation (for every two electrons transferred, four hydrogen ions are translocated across the cytoplasmic membrane), and thus conserves the redox energy in a proton gradient. The chain is NADH-quinone oxidoreductase subunit B 1 from Opitutus terrae (strain DSM 11246 / JCM 15787 / PB90-1).